Here is a 488-residue protein sequence, read N- to C-terminus: Centrosomal protein cep57l1 (488 aa).

Residues 71 to 226 (LESEKTHARD…AQVQTSLEVN (156 aa)) adopt a coiled-coil conformation. 2 disordered regions span residues 232–272 (SASS…PPSK) and 311–342 (PRVSQKDPKTVEHKPSILPGGSRSIPTRLMSS). Basic residues predominate over residues 241–250 (RKVKKKKQSK). Basic and acidic residues-rich tracts occupy residues 259 to 270 (PSSKEPLSKEPP) and 314 to 325 (SQKDPKTVEHKP). Residues 377 to 403 (KNTDMREDLERELDYLVKQMEIKSDQI) adopt a coiled-coil conformation. The interval 416–464 (LKKTAKKQPRPPSTTKPAEDEQNIGATDPCTPRNKGNLANGTGTPNSKA) is disordered. Positions 452–464 (NLANGTGTPNSKA) are enriched in polar residues.

It belongs to the translokin family. Interacts with clip1, mis12, ndc80 and zwint. Interacts with gamma-tubulin.

It is found in the cytoplasm. It localises to the cytoskeleton. The protein resides in the microtubule organizing center. The protein localises to the centrosome. Its subcellular location is the chromosome. It is found in the centromere. It localises to the kinetochore. The protein resides in the spindle. In terms of biological role, required for spindle microtubule attachment to both kinetochores and centrosomes. Also functions to tether minus-ends of spindle microtubules to centrosomes. May act by forming ring-like structures around microtubules, or by serving as a cross-linker or scaffold at the attachment site. The polypeptide is Centrosomal protein cep57l1 (cep57l1) (Xenopus laevis (African clawed frog)).